The primary structure comprises 292 residues: ATP synthase gamma chain (292 aa).

The protein belongs to the ATPase gamma chain family. F-type ATPases have 2 components, CF(1) - the catalytic core - and CF(0) - the membrane proton channel. CF(1) has five subunits: alpha(3), beta(3), gamma(1), delta(1), epsilon(1). CF(0) has three main subunits: a, b and c.

Its subcellular location is the cell inner membrane. In terms of biological role, produces ATP from ADP in the presence of a proton gradient across the membrane. The gamma chain is believed to be important in regulating ATPase activity and the flow of protons through the CF(0) complex. The sequence is that of ATP synthase gamma chain from Hyphomonas neptunium (strain ATCC 15444).